The chain runs to 327 residues: Beta-ketoacyl-[acyl-carrier-protein] synthase III (327 aa).

Active-site residues include cysteine 112 and histidine 253. Residues 254–258 (QANER) form an ACP-binding region. Residue asparagine 283 is part of the active site.

Belongs to the thiolase-like superfamily. FabH family. In terms of assembly, homodimer.

It localises to the cytoplasm. It carries out the reaction malonyl-[ACP] + acetyl-CoA + H(+) = 3-oxobutanoyl-[ACP] + CO2 + CoA. The protein operates within lipid metabolism; fatty acid biosynthesis. In terms of biological role, catalyzes the condensation reaction of fatty acid synthesis by the addition to an acyl acceptor of two carbons from malonyl-ACP. Catalyzes the first condensation reaction which initiates fatty acid synthesis and may therefore play a role in governing the total rate of fatty acid production. Possesses both acetoacetyl-ACP synthase and acetyl transacylase activities. Its substrate specificity determines the biosynthesis of branched-chain and/or straight-chain of fatty acids. This is Beta-ketoacyl-[acyl-carrier-protein] synthase III from Chlamydia trachomatis serovar A (strain ATCC VR-571B / DSM 19440 / HAR-13).